The following is a 257-amino-acid chain: UPF0246 protein lpl1317 (257 aa).

The protein belongs to the UPF0246 family.

This chain is UPF0246 protein lpl1317, found in Legionella pneumophila (strain Lens).